Reading from the N-terminus, the 98-residue chain is NADH-ubiquinone oxidoreductase chain 4L (98 aa).

3 helical membrane passes run 1-21 (MSLT…GLLM), 29-49 (SLLC…MTIL), and 61-81 (IILL…LVMV).

The protein belongs to the complex I subunit 4L family. In terms of assembly, core subunit of respiratory chain NADH dehydrogenase (Complex I) which is composed of 45 different subunits.

Its subcellular location is the mitochondrion inner membrane. It carries out the reaction a ubiquinone + NADH + 5 H(+)(in) = a ubiquinol + NAD(+) + 4 H(+)(out). Its function is as follows. Core subunit of the mitochondrial membrane respiratory chain NADH dehydrogenase (Complex I) which catalyzes electron transfer from NADH through the respiratory chain, using ubiquinone as an electron acceptor. Part of the enzyme membrane arm which is embedded in the lipid bilayer and involved in proton translocation. In Stenoderma rufum (Red fruit bat), this protein is NADH-ubiquinone oxidoreductase chain 4L (MT-ND4L).